We begin with the raw amino-acid sequence, 282 residues long: Bifunctional protein FolD (282 aa).

NADP(+) is bound by residues 165 to 167 and I231; that span reads GAS.

Belongs to the tetrahydrofolate dehydrogenase/cyclohydrolase family. Homodimer.

It carries out the reaction (6R)-5,10-methylene-5,6,7,8-tetrahydrofolate + NADP(+) = (6R)-5,10-methenyltetrahydrofolate + NADPH. The enzyme catalyses (6R)-5,10-methenyltetrahydrofolate + H2O = (6R)-10-formyltetrahydrofolate + H(+). Its pathway is one-carbon metabolism; tetrahydrofolate interconversion. Its function is as follows. Catalyzes the oxidation of 5,10-methylenetetrahydrofolate to 5,10-methenyltetrahydrofolate and then the hydrolysis of 5,10-methenyltetrahydrofolate to 10-formyltetrahydrofolate. In Francisella philomiragia subsp. philomiragia (strain ATCC 25017 / CCUG 19701 / FSC 153 / O#319-036), this protein is Bifunctional protein FolD.